The primary structure comprises 349 residues: Core protein VP7 (349 aa).

N-linked (GlcNAc...) asparagine; by host glycosylation is found at Asn-148 and Asn-287.

It belongs to the orbivirus VP7 family.

It localises to the virion. Functionally, the VP7 protein is one of the five proteins (with VP1, VP3, VP4, and VP6) which form the inner capsid of the virus. This is Core protein VP7 (Segment-7) from Epizootic hemorrhagic disease virus 1 (EHDV-1).